We begin with the raw amino-acid sequence, 110 residues long: U1-lycotoxin-Ls1bb (110 aa).

A signal peptide spans 1–20 (MKFVLLFGVLLVTLFSYSSA). Positions 21–44 (EMLDDFDQADEDELLSLIEKEEAR) are excised as a propeptide. 4 disulfides stabilise this stretch: Cys-47-Cys-62, Cys-54-Cys-71, Cys-61-Cys-89, and Cys-73-Cys-87.

The protein belongs to the neurotoxin 19 (CSTX) family. 03 subfamily. Expressed by the venom gland.

It localises to the secreted. The sequence is that of U1-lycotoxin-Ls1bb from Lycosa singoriensis (Wolf spider).